A 227-amino-acid polypeptide reads, in one-letter code: Cytochrome c oxidase subunit 2 (227 aa).

Residues 1-14 (MAYPFQLGFQDATS) are Mitochondrial intermembrane-facing. A helical membrane pass occupies residues 15–45 (PIMEELLHFHDHALMIVFLISSLVLYLISVM). The Mitochondrial matrix portion of the chain corresponds to 46 to 59 (LTTSLTHTSTMDAQ). The helical transmembrane segment at 60 to 87 (EVETIWTILPAMILIMIALPSLRILYMM) threads the bilayer. The Mitochondrial intermembrane portion of the chain corresponds to 88–227 (DEINNPYLTV…YFEKWSSSML (140 aa)). Cu cation contacts are provided by His-161, Cys-196, Glu-198, Cys-200, His-204, and Met-207. Glu-198 lines the Mg(2+) pocket. Tyr-218 carries the phosphotyrosine modification.

This sequence belongs to the cytochrome c oxidase subunit 2 family. Component of the cytochrome c oxidase (complex IV, CIV), a multisubunit enzyme composed of 14 subunits. The complex is composed of a catalytic core of 3 subunits MT-CO1, MT-CO2 and MT-CO3, encoded in the mitochondrial DNA, and 11 supernumerary subunits COX4I, COX5A, COX5B, COX6A, COX6B, COX6C, COX7A, COX7B, COX7C, COX8 and NDUFA4, which are encoded in the nuclear genome. The complex exists as a monomer or a dimer and forms supercomplexes (SCs) in the inner mitochondrial membrane with NADH-ubiquinone oxidoreductase (complex I, CI) and ubiquinol-cytochrome c oxidoreductase (cytochrome b-c1 complex, complex III, CIII), resulting in different assemblies (supercomplex SCI(1)III(2)IV(1) and megacomplex MCI(2)III(2)IV(2)). Found in a complex with TMEM177, COA6, COX18, COX20, SCO1 and SCO2. Interacts with TMEM177 in a COX20-dependent manner. Interacts with COX20. Interacts with COX16. It depends on Cu cation as a cofactor.

It is found in the mitochondrion inner membrane. It catalyses the reaction 4 Fe(II)-[cytochrome c] + O2 + 8 H(+)(in) = 4 Fe(III)-[cytochrome c] + 2 H2O + 4 H(+)(out). In terms of biological role, component of the cytochrome c oxidase, the last enzyme in the mitochondrial electron transport chain which drives oxidative phosphorylation. The respiratory chain contains 3 multisubunit complexes succinate dehydrogenase (complex II, CII), ubiquinol-cytochrome c oxidoreductase (cytochrome b-c1 complex, complex III, CIII) and cytochrome c oxidase (complex IV, CIV), that cooperate to transfer electrons derived from NADH and succinate to molecular oxygen, creating an electrochemical gradient over the inner membrane that drives transmembrane transport and the ATP synthase. Cytochrome c oxidase is the component of the respiratory chain that catalyzes the reduction of oxygen to water. Electrons originating from reduced cytochrome c in the intermembrane space (IMS) are transferred via the dinuclear copper A center (CU(A)) of subunit 2 and heme A of subunit 1 to the active site in subunit 1, a binuclear center (BNC) formed by heme A3 and copper B (CU(B)). The BNC reduces molecular oxygen to 2 water molecules using 4 electrons from cytochrome c in the IMS and 4 protons from the mitochondrial matrix. The protein is Cytochrome c oxidase subunit 2 (MT-CO2) of Rousettus leschenaultii (Leschenault's rousette).